A 572-amino-acid chain; its full sequence is Myb-like protein Y (572 aa).

A compositionally biased stretch (polar residues) spans 196–211 (QSQSQLPTATNNNNKQ). Residues 196–283 (QSQSQLPTAT…NNNNNNNNNE (88 aa)) are disordered. 2 stretches are compositionally biased toward low complexity: residues 222 to 237 (TATA…TTTT) and 260 to 281 (NDNN…NNNN). In terms of domain architecture, Myb-like spans 311–360 (PWTVEDQKKLEDALTKYPPSRFSSVSRWQMVSKELGISPKAVALRYNQML). The tract at residues 367 to 456 (KPSLQQQQQQ…TTVTPNMTTP (90 aa)) is disordered. Low complexity-rich tracts occupy residues 371–392 (QQQQ…TTTT) and 414–425 (SSFSSPSSSSKE). The segment covering 426 to 435 (SPNKKEKTTH) has biased composition (basic and acidic residues). A compositionally biased stretch (low complexity) spans 436 to 455 (DTTTTTNTATTTTVTPNMTT).

The protein is Myb-like protein Y (mybY) of Dictyostelium discoideum (Social amoeba).